The following is a 376-amino-acid chain: UDP-N-acetylglucosamine--N-acetylmuramyl-(pentapeptide) pyrophosphoryl-undecaprenol N-acetylglucosamine transferase (376 aa).

UDP-N-acetyl-alpha-D-glucosamine is bound by residues 12–14 (TAG), Asn126, Arg163, Ser198, and Gln296.

The protein belongs to the glycosyltransferase 28 family. MurG subfamily.

The protein resides in the cell membrane. The enzyme catalyses di-trans,octa-cis-undecaprenyl diphospho-N-acetyl-alpha-D-muramoyl-L-alanyl-D-glutamyl-meso-2,6-diaminopimeloyl-D-alanyl-D-alanine + UDP-N-acetyl-alpha-D-glucosamine = di-trans,octa-cis-undecaprenyl diphospho-[N-acetyl-alpha-D-glucosaminyl-(1-&gt;4)]-N-acetyl-alpha-D-muramoyl-L-alanyl-D-glutamyl-meso-2,6-diaminopimeloyl-D-alanyl-D-alanine + UDP + H(+). It functions in the pathway cell wall biogenesis; peptidoglycan biosynthesis. In terms of biological role, cell wall formation. Catalyzes the transfer of a GlcNAc subunit on undecaprenyl-pyrophosphoryl-MurNAc-pentapeptide (lipid intermediate I) to form undecaprenyl-pyrophosphoryl-MurNAc-(pentapeptide)GlcNAc (lipid intermediate II). The sequence is that of UDP-N-acetylglucosamine--N-acetylmuramyl-(pentapeptide) pyrophosphoryl-undecaprenol N-acetylglucosamine transferase from Frankia casuarinae (strain DSM 45818 / CECT 9043 / HFP020203 / CcI3).